The following is a 181-amino-acid chain: Adenine phosphoribosyltransferase (181 aa).

It belongs to the purine/pyrimidine phosphoribosyltransferase family. As to quaternary structure, homodimer.

The protein localises to the cytoplasm. It catalyses the reaction AMP + diphosphate = 5-phospho-alpha-D-ribose 1-diphosphate + adenine. Its pathway is purine metabolism; AMP biosynthesis via salvage pathway; AMP from adenine: step 1/1. Functionally, catalyzes a salvage reaction resulting in the formation of AMP, that is energically less costly than de novo synthesis. The chain is Adenine phosphoribosyltransferase from Aliivibrio salmonicida (strain LFI1238) (Vibrio salmonicida (strain LFI1238)).